Consider the following 258-residue polypeptide: MGVEKIKAAFENGKKAFIPYVMGGDGGLEKLKERIRFLDEAGASIVEIGIPFSDPVADGPTIQRAGKRALDSGVTVKGIFQALIEVRKEVQIPFVLMTYLNPVLAFGKEQFIENCIEAGVDGIIVPDLPYEEQDIIAPLLRTANIALIPLVTVTSPIERIEKITSESEGFVYAVTVAGVTGVRQNFKEEIHSYLEKVKSHTHLPVVAGFGISTKEHVEEMITICDGVVVGSKVIELLENEKREEICELIQATKQKEEA.

Catalysis depends on proton acceptor residues Glu-47 and Asp-58.

The protein belongs to the TrpA family. As to quaternary structure, tetramer of two alpha and two beta chains.

It catalyses the reaction (1S,2R)-1-C-(indol-3-yl)glycerol 3-phosphate + L-serine = D-glyceraldehyde 3-phosphate + L-tryptophan + H2O. It functions in the pathway amino-acid biosynthesis; L-tryptophan biosynthesis; L-tryptophan from chorismate: step 5/5. Its function is as follows. The alpha subunit is responsible for the aldol cleavage of indoleglycerol phosphate to indole and glyceraldehyde 3-phosphate. The chain is Tryptophan synthase alpha chain from Bacillus cereus (strain ATCC 10987 / NRS 248).